Consider the following 480-residue polypeptide: Probable efflux pump outer membrane protein SepC (480 aa).

The signal sequence occupies residues 1–16 (MKTHYLSIALSVALSG). The N-palmitoyl cysteine moiety is linked to residue Cys17. Cys17 carries the S-diacylglycerol cysteine lipid modification.

Belongs to the outer membrane factor (OMF) (TC 1.B.17) family.

Its subcellular location is the cell outer membrane. Its function is as follows. Probable outer membrane component of the SepABC efflux pump with unknown specificity. The chain is Probable efflux pump outer membrane protein SepC (sepC) from Pseudomonas putida (strain ATCC 700007 / DSM 6899 / JCM 31910 / BCRC 17059 / LMG 24140 / F1).